Reading from the N-terminus, the 288-residue chain is Energy-coupling factor transporter ATP-binding protein EcfA2 (288 aa).

One can recognise an ABC transporter domain in the interval 3–245 (IKIENLTHVY…VDTLESVGLA (243 aa)). ATP is bound at residue 40–47 (GHTGSGKS).

It belongs to the ABC transporter superfamily. Energy-coupling factor EcfA family. Forms a stable energy-coupling factor (ECF) transporter complex composed of 2 membrane-embedded substrate-binding proteins (S component), 2 ATP-binding proteins (A component) and 2 transmembrane proteins (T component).

The protein resides in the cell membrane. Functionally, ATP-binding (A) component of a common energy-coupling factor (ECF) ABC-transporter complex. Unlike classic ABC transporters this ECF transporter provides the energy necessary to transport a number of different substrates. The sequence is that of Energy-coupling factor transporter ATP-binding protein EcfA2 from Clostridium tetani (strain Massachusetts / E88).